The chain runs to 146 residues: UPF0178 protein BCAH187_A3092 (146 aa).

Belongs to the UPF0178 family.

The polypeptide is UPF0178 protein BCAH187_A3092 (Bacillus cereus (strain AH187)).